The following is a 105-amino-acid chain: Large ribosomal subunit protein bL21 (105 aa).

It belongs to the bacterial ribosomal protein bL21 family. In terms of assembly, part of the 50S ribosomal subunit. Contacts protein L20.

In terms of biological role, this protein binds to 23S rRNA in the presence of protein L20. This is Large ribosomal subunit protein bL21 from Frankia casuarinae (strain DSM 45818 / CECT 9043 / HFP020203 / CcI3).